A 585-amino-acid chain; its full sequence is MSQATASEITDEGVIESVSGPVVTAVDLDARMNDVVYVGEEGLMGEVIEIEGNLTTIQVYEETSDVAPGEPVENTGEPLSVDLGPGMMDSIYDGVQRPLDVLEEKMGAFLDRGVDAPGIDLEKTWEFNPEVSEGDEVSPGDVVGIVPETESIDHKVLVPPDYEGGEVTAVESGNFTVDETVVELDSGEEIQMRQEWPVREPRPTVEKETPTTPLVSGQRVLDGLFPIAKGGTAAIPGPFGSGKTVTQHQLAKWADADIVVYVGCGERGNEMTEVIEDFPELEDPKTGKPLMSRTCLIANTSNMPVAARESCVYTGITIAEYYRDMGYDVALMADSTSRWAEAMREISSRLEEMPGEEGYPAYLAARLSEFYERAGKFQNMNGSEGSISVIGAVSPPGGDFSEPVTQNTLRIVKCFWALDADLAERRHFPSINWNESYSLYKEQLDPWWRENVHEEFPEVRQWAVDVLDEEDELQEIVQLVGKDALPEDQQLTLEVARYIREAWLQQNAFHDVDTYCEPEKTYQMLTAIQHFNDEAFEALDAGVPVEEIIDVDAVPQLNRMNTQEDYEEYIEELKGDLTDQLRELY.

237 to 244 lines the ATP pocket; sequence GPFGSGKT.

The protein belongs to the ATPase alpha/beta chains family. Has multiple subunits with at least A(3), B(3), C, D, E, F, H, I and proteolipid K(x).

It is found in the cell membrane. It carries out the reaction ATP + H2O + 4 H(+)(in) = ADP + phosphate + 5 H(+)(out). Functionally, component of the A-type ATP synthase that produces ATP from ADP in the presence of a proton gradient across the membrane. The A chain is the catalytic subunit. The chain is A-type ATP synthase subunit A from Natronomonas pharaonis (strain ATCC 35678 / DSM 2160 / CIP 103997 / JCM 8858 / NBRC 14720 / NCIMB 2260 / Gabara) (Halobacterium pharaonis).